Reading from the N-terminus, the 495-residue chain is Probable cytosol aminopeptidase (495 aa).

Residues lysine 267 and aspartate 272 each coordinate Mn(2+). Lysine 279 is an active-site residue. Residues aspartate 290, aspartate 349, and glutamate 351 each coordinate Mn(2+). Residue arginine 353 is part of the active site.

It belongs to the peptidase M17 family. Requires Mn(2+) as cofactor.

It localises to the cytoplasm. It catalyses the reaction Release of an N-terminal amino acid, Xaa-|-Yaa-, in which Xaa is preferably Leu, but may be other amino acids including Pro although not Arg or Lys, and Yaa may be Pro. Amino acid amides and methyl esters are also readily hydrolyzed, but rates on arylamides are exceedingly low.. The catalysed reaction is Release of an N-terminal amino acid, preferentially leucine, but not glutamic or aspartic acids.. Presumably involved in the processing and regular turnover of intracellular proteins. Catalyzes the removal of unsubstituted N-terminal amino acids from various peptides. This is Probable cytosol aminopeptidase from Histophilus somni (strain 2336) (Haemophilus somnus).